A 1039-amino-acid chain; its full sequence is Antigen 43 (1039 aa).

The signal sequence occupies residues 1–52 (MKRHLNTCYRLVWNHMTGAFVVASELARARGKRGGVAVALSLAAVTSLPVLA). The region spanning 737 to 1039 (VNGENNSVRL…NGQATLNVTF (303 aa)) is the Autotransporter domain.

Interaction with TamA of the translocation and assembly module (TAM) initiates insertion in the outer membrane.

It localises to the periplasm. It is found in the secreted. Its subcellular location is the cell surface. The protein localises to the cell outer membrane. In terms of biological role, controls colony form variation and autoaggregation. May function as an adhesin. The chain is Antigen 43 (flu) from Escherichia coli (strain K12).